We begin with the raw amino-acid sequence, 452 residues long: Phosphoglucosamine mutase (452 aa).

Catalysis depends on Ser103, which acts as the Phosphoserine intermediate. Ser103, Asp243, Asp245, and Asp247 together coordinate Mg(2+). Ser103 is subject to Phosphoserine.

This sequence belongs to the phosphohexose mutase family. Mg(2+) serves as cofactor. Activated by phosphorylation.

It catalyses the reaction alpha-D-glucosamine 1-phosphate = D-glucosamine 6-phosphate. In terms of biological role, catalyzes the conversion of glucosamine-6-phosphate to glucosamine-1-phosphate. This is Phosphoglucosamine mutase from Limosilactobacillus fermentum (strain NBRC 3956 / LMG 18251) (Lactobacillus fermentum).